We begin with the raw amino-acid sequence, 288 residues long: Bis(5'-nucleosyl)-tetraphosphatase, symmetrical (288 aa).

This sequence belongs to the Ap4A hydrolase family.

The catalysed reaction is P(1),P(4)-bis(5'-adenosyl) tetraphosphate + H2O = 2 ADP + 2 H(+). Its function is as follows. Hydrolyzes diadenosine 5',5'''-P1,P4-tetraphosphate to yield ADP. In Pseudomonas putida (strain GB-1), this protein is Bis(5'-nucleosyl)-tetraphosphatase, symmetrical.